The sequence spans 203 residues: IQ domain-containing protein F3 (203 aa).

A compositionally biased stretch (basic and acidic residues) spans 1 to 12 (MELDQDKKKETP). The tract at residues 1 to 111 (MELDQDKKKE…CETQEADRSE (111 aa)) is disordered. The stretch at 13 to 82 (EETENVNEVQ…EADKAILERS (70 aa)) forms a coiled coil. Residues 29 to 38 (DEETEAEAEE) are compositionally biased toward acidic residues. Basic and acidic residues predominate over residues 39–51 (ADKAILERSDSVK). The segment covering 64-73 (DEETEAEAEE) has biased composition (acidic residues). Composition is skewed to basic and acidic residues over residues 74–86 (ADKA…DSVK) and 96–111 (QIQE…DRSE). The IQ domain maps to 129–158 (VMLAGVKIQAWWRGTLVRRTLLLAALNAWT).

The chain is IQ domain-containing protein F3 (Iqcf3) from Mus musculus (Mouse).